A 158-amino-acid polypeptide reads, in one-letter code: GAF domain-containing protein A (158 aa).

Residues 32–158 enclose the GAF domain; that stretch reads NQIANLANVT…LTQILKLLDN (127 aa).

The protein belongs to the free Met sulfoxide reductase family.

The sequence is that of GAF domain-containing protein A (gafA) from Dictyostelium discoideum (Social amoeba).